The sequence spans 560 residues: Secreted RxLR effector protein 142 (560 aa).

The first 22 residues, 1 to 22 (MRRAYFVAIALLVAAGGKTAAG), serve as a signal peptide directing secretion. 2 disordered regions span residues 48–73 (QSQN…ERTP) and 354–377 (INRP…LNNQ). Residues 54–72 (ESRDPKDDLKLSAGNEERT) are compositionally biased toward basic and acidic residues. The RxLR-dEER motif lies at 56-71 (RDPKDDLKLSAGNEER). The segment covering 361–377 (GPSTNGATTSNGGLNNQ) has biased composition (polar residues).

It belongs to the RxLR effector family.

It is found in the secreted. It localises to the host nucleus. In terms of biological role, secreted effector that completely suppresses the host cell death induced by cell death-inducing proteins. The protein is Secreted RxLR effector protein 142 of Plasmopara viticola (Downy mildew of grapevine).